Reading from the N-terminus, the 275-residue chain is NAD kinase (275 aa).

The Proton acceptor role is filled by D68. Residues 68 to 69 (DG), R73, 136 to 137 (NE), K147, R164, D166, 177 to 182 (TAYAMS), A201, and Q236 contribute to the NAD(+) site.

Belongs to the NAD kinase family. A divalent metal cation is required as a cofactor.

The protein localises to the cytoplasm. It carries out the reaction NAD(+) + ATP = ADP + NADP(+) + H(+). Involved in the regulation of the intracellular balance of NAD and NADP, and is a key enzyme in the biosynthesis of NADP. Catalyzes specifically the phosphorylation on 2'-hydroxyl of the adenosine moiety of NAD to yield NADP. The polypeptide is NAD kinase (Methanosarcina acetivorans (strain ATCC 35395 / DSM 2834 / JCM 12185 / C2A)).